The primary structure comprises 204 residues: Large ribosomal subunit protein bL25 (204 aa).

Belongs to the bacterial ribosomal protein bL25 family. CTC subfamily. As to quaternary structure, part of the 50S ribosomal subunit; part of the 5S rRNA/L5/L18/L25 subcomplex. Contacts the 5S rRNA. Binds to the 5S rRNA independently of L5 and L18.

This is one of the proteins that binds to the 5S RNA in the ribosome where it forms part of the central protuberance. In Rhizobium etli (strain ATCC 51251 / DSM 11541 / JCM 21823 / NBRC 15573 / CFN 42), this protein is Large ribosomal subunit protein bL25.